Consider the following 492-residue polypeptide: Beclin 1-associated autophagy-related key regulator (492 aa).

Serine 29 is modified (phosphoserine). The cysteine repeats stretch occupies residues 43–58 (CPLCNTTRRRLTCAKC). Residues 71-180 (DRERFIDKKE…KLGDLVEKKT (110 aa)) are a coiled coil. The disordered stretch occupies residues 410-473 (PGVAGESDES…PIASSSAGGM (64 aa)). Residues 413 to 492 (AGESDESGDE…SWFKAYTGHR (80 aa)) form a BATS region. Positions 415–433 (ESDESGDERVSDEETDLGT) are enriched in acidic residues. A Phosphoserine modification is found at serine 416. Threonine 429 carries the post-translational modification Phosphothreonine. Low complexity predominate over residues 448–473 (SQSVEVSQSQSTQASPPIASSSAGGM).

It belongs to the ATG14 family. In terms of assembly, forms homooligomers; homo-oligomerization is essential for the roles in membrane tethering and enhancement of SNARE-mediated fusion. Component of the PI3K (PI3KC3/PI3K-III/class III phosphatidylinositol 3-kinase) complex I (PI3KC3-C1) in which the core composed of the catalytic subunit PIK3C3, the regulatory subunit PIK3R4 and BECN1 is associated with ATG14. PI3KC3-C1 displays a V-shaped architecture with PIK3R4 serving as a bridge between PIK3C3 and the ATG14:BECN1 subcomplex. PI3KC3-C1 can associate with further regulatory subunits. Interacts with PIK3CB. Interacts (via coiled-coil domain) with BECN2 (via coiled-coil domain); this interaction is tighter than BECN2 self-association. Interacts with the STX17-SNAP29 binary t-SNARE complex. Interacts with NRBF2. Interacts with PIK3C3 and BECN1; this interaction is increased in the absence of TMEM39A. Interacts with STEEP1; the interaction is required for trafficking of STING1 from the endoplasmic reticulum. Interacts with ARMC3 (via ARM domains). Post-translationally, ubiquitinated via 'Lys-6', 'Lys-11' and 'Lys-63'-linked polyubiquitin chains on multiple lysines by MARCHF7, leading to ATG14 aggregation and loss of interaction with STX17.

Its subcellular location is the cytoplasm. The protein localises to the endoplasmic reticulum membrane. It localises to the preautophagosomal structure membrane. It is found in the cytoplasmic vesicle. The protein resides in the autophagosome membrane. Its function is as follows. Required for both basal and inducible autophagy. Determines the localization of the autophagy-specific PI3-kinase complex PI3KC3-C1. Plays a role in autophagosome formation and MAP1LC3/LC3 conjugation to phosphatidylethanolamine. Promotes BECN1 translocation from the trans-Golgi network to autophagosomes. Enhances PIK3C3 activity in a BECN1-dependent manner. Essential for the autophagy-dependent phosphorylation of BECN1. Stimulates the phosphorylation of BECN1, but suppresses the phosphorylation PIK3C3 by AMPK. Binds to STX17-SNAP29 binary t-SNARE complex on autophagosomes and primes it for VAMP8 interaction to promote autophagosome-endolysosome fusion. Modulates the hepatic lipid metabolism. This Homo sapiens (Human) protein is Beclin 1-associated autophagy-related key regulator.